Consider the following 140-residue polypeptide: MSWDSYIDNLVAQTKDASGTAHSDRACIIGLDGGAPWTTAGHANALKLQGTEGANIAKCFKSKDFSAFMAGGVHAEGLKYQFLREEDAKLVLAKKKGEGAITLQASKTAIVIAHCPEGGQQGNTNKGVSVIAEYLESLGM.

Ser2 bears the N-acetylserine mark.

The protein belongs to the profilin family. Occurs in many kinds of cells as a complex with monomeric actin in a 1:1 ratio.

It localises to the cytoplasm. It is found in the cytoskeleton. Binds to actin and affects the structure of the cytoskeleton. At high concentrations, profilin prevents the polymerization of actin, whereas it enhances it at low concentrations. By binding to PIP2, it inhibits the formation of IP3 and DG. The chain is Profilin from Clypeaster japonicus (Sand dollar).